A 58-amino-acid polypeptide reads, in one-letter code: Large ribosomal subunit protein uL30 (58 aa).

The protein belongs to the universal ribosomal protein uL30 family. In terms of assembly, part of the 50S ribosomal subunit.

The protein is Large ribosomal subunit protein uL30 of Psychromonas ingrahamii (strain DSM 17664 / CCUG 51855 / 37).